The primary structure comprises 243 residues: 3-deoxy-manno-octulosonate cytidylyltransferase (243 aa).

The protein belongs to the KdsB family.

The protein localises to the cytoplasm. It carries out the reaction 3-deoxy-alpha-D-manno-oct-2-ulosonate + CTP = CMP-3-deoxy-beta-D-manno-octulosonate + diphosphate. It participates in nucleotide-sugar biosynthesis; CMP-3-deoxy-D-manno-octulosonate biosynthesis; CMP-3-deoxy-D-manno-octulosonate from 3-deoxy-D-manno-octulosonate and CTP: step 1/1. It functions in the pathway bacterial outer membrane biogenesis; lipopolysaccharide biosynthesis. In terms of biological role, activates KDO (a required 8-carbon sugar) for incorporation into bacterial lipopolysaccharide in Gram-negative bacteria. This is 3-deoxy-manno-octulosonate cytidylyltransferase from Bartonella bacilliformis (strain ATCC 35685 / KC583 / Herrer 020/F12,63).